Consider the following 133-residue polypeptide: uncharacterized protein (133 aa).

A helical membrane pass occupies residues 11–31 (YFLISVFLIFIVSGITYFYST).

The protein resides in the membrane. This is an uncharacterized protein from Borreliella burgdorferi (strain ATCC 35210 / DSM 4680 / CIP 102532 / B31) (Borrelia burgdorferi).